Here is a 132-residue protein sequence, read N- to C-terminus: Small ribosomal subunit protein uS11 (132 aa).

Residues 1–24 (MAAPKQAARKPRRRDRKSVPVGQA) form a disordered region. The segment covering 7–16 (AARKPRRRDR) has biased composition (basic residues).

Belongs to the universal ribosomal protein uS11 family. As to quaternary structure, part of the 30S ribosomal subunit. Interacts with proteins S7 and S18. Binds to IF-3.

Functionally, located on the platform of the 30S subunit, it bridges several disparate RNA helices of the 16S rRNA. Forms part of the Shine-Dalgarno cleft in the 70S ribosome. The sequence is that of Small ribosomal subunit protein uS11 from Bifidobacterium longum (strain DJO10A).